Here is a 298-residue protein sequence, read N- to C-terminus: Acetylglutamate kinase (298 aa).

Substrate contacts are provided by residues 69–70, R91, and N196; that span reads GG.

It belongs to the acetylglutamate kinase family. ArgB subfamily.

It localises to the cytoplasm. It catalyses the reaction N-acetyl-L-glutamate + ATP = N-acetyl-L-glutamyl 5-phosphate + ADP. It functions in the pathway amino-acid biosynthesis; L-arginine biosynthesis; N(2)-acetyl-L-ornithine from L-glutamate: step 2/4. Its function is as follows. Catalyzes the ATP-dependent phosphorylation of N-acetyl-L-glutamate. In Granulibacter bethesdensis (strain ATCC BAA-1260 / CGDNIH1), this protein is Acetylglutamate kinase.